A 265-amino-acid polypeptide reads, in one-letter code: HUWE1-associated protein modifying stress responses (265 aa).

Disordered regions lie at residues 1–22 (MEDK…HWFS), 145–170 (RNSR…GSSV), 195–218 (VRSS…RRNG), and 240–265 (GTRK…NRMI). Composition is skewed to polar residues over residues 156–170 (VSPN…GSSV) and 195–212 (VRSS…SSNT).

Belongs to the TAPR1 family. In terms of assembly, oligomer.

Its subcellular location is the nucleus. It is found in the cytoplasm. Its function is as follows. Acts as a central player within a network of stress response pathways promoting cellular adaptability. Functions as a negative regulator of TP53/P53 in the cellular response to telomere erosion and probably also DNA damage. This Xenopus laevis (African clawed frog) protein is HUWE1-associated protein modifying stress responses.